We begin with the raw amino-acid sequence, 66 residues long: Small ribosomal subunit protein bS21 (66 aa).

It belongs to the bacterial ribosomal protein bS21 family.

This Persephonella marina (strain DSM 14350 / EX-H1) protein is Small ribosomal subunit protein bS21.